Reading from the N-terminus, the 400-residue chain is Lysophospholipid transporter LplT (400 aa).

12 consecutive transmembrane segments (helical) span residues 19–39 (VIVA…ATLA), 53–73 (VLQM…GQMA), 91–111 (AGAA…LVGI), 139–159 (LMEA…GVLA), 164–184 (IAAL…NLFI), 195–213 (SWRL…VVLW), 227–247 (LFWG…PVAL), 257–277 (YLNA…AKLV), 281–301 (TVSR…IFSL), 304–324 (ALLP…FFVV), 352–372 (NSAM…GVPA), and 373–393 (VAIG…LWIW).

Belongs to the major facilitator superfamily. LplT (TC 2.A.1.42) family.

The protein resides in the cell inner membrane. Its function is as follows. Catalyzes the facilitated diffusion of 2-acyl-glycero-3-phosphoethanolamine (2-acyl-GPE) into the cell. The polypeptide is Lysophospholipid transporter LplT (Salmonella enteritidis PT4 (strain P125109)).